A 256-amino-acid chain; its full sequence is Cysteine-rich repeat secretory protein 42 (256 aa).

The first 26 residues, 1–26 (MSSVFGSVHILAMIAIQLLLTHSVSS), serve as a signal peptide directing secretion. Gnk2-homologous domains are found at residues 33–136 (YLHH…SVAS) and 142–253 (YEND…LYPF).

It belongs to the cysteine-rich repeat secretory protein family.

It localises to the secreted. The protein is Cysteine-rich repeat secretory protein 42 (CRRSP42) of Arabidopsis thaliana (Mouse-ear cress).